An 82-amino-acid chain; its full sequence is Consomatin Ro2 (82 aa).

The signal sequence occupies residues 1–22 (MQTAYWLMVMMMVWITAPLYEG). Residues 23–57 (GKPNDVIRGLVPDDLTPQFILRSLISRRRSDKDVR) constitute a propeptide that is removed on maturation. C62 and C68 are oxidised to a cystine. W64 is modified (D-tryptophan). 4-hydroxyproline occurs at positions 69 and 70. Residues 72-82 (LWRRHDRKGKD) constitute a propeptide that is removed on maturation.

The protein belongs to the conotoxin C superfamily. Consomatin family. As to expression, expressed by the venom duct.

It is found in the secreted. In terms of biological role, moderately activates human somatostatin receptors (SSTR) with a preferential activation of SSTR1 and SSTR4. In vivo, does not cause behavioral changes in mice within a few minutes of intracranial injection, but causes a progressive loss of movement thereafter. Four to five hours after injection, mice recover, even with the highest dose tested. Shows antinociception and antihyperalgesia activities in two mouse models of acute pain, most probably by acting outside the central nervous system. The polypeptide is Consomatin Ro2 (Conus rolani (Cone snail)).